Consider the following 67-residue polypeptide: DNA-directed RNA polymerase subunit omega (67 aa).

This sequence belongs to the RNA polymerase subunit omega family. As to quaternary structure, RNAP is composed of a core of 2 alpha, a beta and a beta' subunit. The core is associated with a delta subunit, and at least one of epsilon or omega. When a sigma factor is associated with the core the holoenzyme is formed, which can initiate transcription.

It carries out the reaction RNA(n) + a ribonucleoside 5'-triphosphate = RNA(n+1) + diphosphate. Functionally, promotes RNA polymerase assembly. Latches the N- and C-terminal regions of the beta' subunit thereby facilitating its interaction with the beta and alpha subunits. In vitro reconstitution experiments this subunit is dispensible. This is DNA-directed RNA polymerase subunit omega (rpoZ) from Bacillus subtilis (strain 168).